The following is a 666-amino-acid chain: MYLLILFLPLLGSLISGFGGRWLGCRGTNTFSTLCVVVSSLFSLLAFFEIGLTNTTCTIFLVSWIKSGAFYVSWGFLFDSLTVTMLVVITLVSSLVHIYSIKYMENDPHQPRFMSYLEIFTFFMLILVTADNLIQMFLGWEGVGLASYLLINFWYTRLAANQSAIKALIVNRVGDFGLSLGIFLIFWVFNSVDYSVIFSLVPLFDNQFLTFLGFKLHVLTLISLFLFIGAIGKSAQLGLHTWLPDAMEGPTPVSALIHAATMVTAGVFLMIRFSPLLEFSPTILFILITFGSLTAFFAAVTGVFQHDLKRVIAYSTCSQLGYMIFSCGMSCYDVSLFHLANHAFFKALLFLSAGSVIHAVSNEQDMRRMGSLLKFMPLTYSVMLIGTLALIGFPFLTGFYSKDFILELTQISSYSNLQMSYISFACWLGTMSVFFTSFYSFRLIYLTFLNNTNLAKSSLNLVHESSLLMIFPLIILSIGSIFAGYLIRDLFVGSGSDFWGAAIFILPKHSTFIEAEELPIVVKWLPFILSLLGIFFASFVQIFLKTFYFKSNLQNLLSFFTFLINKKWYWDVLYNRLIVLPILNFGYSISFKILDRGFIELSGPYGFTKFVSFWSQILIKLQTGQITHYLFFMIFTFCSFSIILVYSYINLTFNLLLLFFTLFFFI.

17 helical membrane-spanning segments follow: residues 3-23 (LLILFLPLLGSLISGFGGRWL), 31-51 (FSTLCVVVSSLFSLLAFFEIG), 59-78 (IFLVSWIKSGAFYVSWGFLF), 82-101 (TVTMLVVITLVSSLVHIYSI), 119-139 (IFTFFMLILVTADNLIQMFLG), 168-190 (LIVNRVGDFGLSLGIFLIFWVFN), 211-231 (FLGFKLHVLTLISLFLFIGAI), 251-271 (TPVSALIHAATMVTAGVFLMI), 283-303 (ILFILITFGSLTAFFAAVTGV), 311-333 (VIAYSTCSQLGYMIFSCGMSCYD), 337-357 (FHLANHAFFKALLFLSAGSVI), 375-395 (FMPLTYSVMLIGTLALIGFPF), 421-441 (YISFACWLGTMSVFFTSFYSF), 467-487 (LLMIFPLIILSIGSIFAGYLI), 524-544 (WLPFILSLLGIFFASFVQIFL), 572-594 (VLYNRLIVLPILNFGYSISFKIL), and 629-649 (YLFFMIFTFCSFSIILVYSYI).

Belongs to the complex I subunit 5 family.

It is found in the mitochondrion inner membrane. It catalyses the reaction a ubiquinone + NADH + 5 H(+)(in) = a ubiquinol + NAD(+) + 4 H(+)(out). Functionally, core subunit of the mitochondrial membrane respiratory chain NADH dehydrogenase (Complex I) that is believed to belong to the minimal assembly required for catalysis. Complex I functions in the transfer of electrons from NADH to the respiratory chain. The immediate electron acceptor for the enzyme is believed to be ubiquinone. This Chondrus crispus (Carrageen Irish moss) protein is NADH-ubiquinone oxidoreductase chain 5 (ND5).